The sequence spans 259 residues: Dihydroorotate dehydrogenase B (NAD(+)), electron transfer subunit (259 aa).

The 101-residue stretch at 1–101 (MKIEDCTVEE…MGPLGRGYDV (101 aa)) folds into the FAD-binding FR-type domain. Residues 52-55 (RPIS), 69-71 (IYR), and 76-77 (GT) contribute to the FAD site. [2Fe-2S] cluster contacts are provided by cysteine 223, cysteine 228, cysteine 231, and cysteine 245.

It belongs to the PyrK family. Heterotetramer of 2 PyrK and 2 PyrD type B subunits. The cofactor is [2Fe-2S] cluster. It depends on FAD as a cofactor.

It participates in pyrimidine metabolism; UMP biosynthesis via de novo pathway; orotate from (S)-dihydroorotate (NAD(+) route): step 1/1. Functionally, responsible for channeling the electrons from the oxidation of dihydroorotate from the FMN redox center in the PyrD type B subunit to the ultimate electron acceptor NAD(+). This is Dihydroorotate dehydrogenase B (NAD(+)), electron transfer subunit from Fusobacterium nucleatum subsp. nucleatum (strain ATCC 25586 / DSM 15643 / BCRC 10681 / CIP 101130 / JCM 8532 / KCTC 2640 / LMG 13131 / VPI 4355).